The primary structure comprises 134 residues: Arsenate reductase (134 aa).

Active-site nucleophile residues include cysteine 11, cysteine 83, and cysteine 90. Disulfide bonds link cysteine 11-cysteine 83 and cysteine 83-cysteine 90.

It belongs to the low molecular weight phosphotyrosine protein phosphatase family. Thioredoxin-coupled ArsC subfamily.

The protein resides in the cytoplasm. The catalysed reaction is arsenate + [thioredoxin]-dithiol + H(+) = arsenite + [thioredoxin]-disulfide + H2O. Its function is as follows. Catalyzes the reduction of arsenate [As(V)] to arsenite [As(III)]. The protein is Arsenate reductase of Brevibacillus brevis (strain 47 / JCM 6285 / NBRC 100599).